Reading from the N-terminus, the 279-residue chain is Putative ABC transporter ATP-binding protein GSU3001 (279 aa).

One can recognise an ABC transporter domain in the interval 1-237 (MRFSVDLKAY…PAEMESVKLR (237 aa)). 36-43 (GSNGSGKT) contributes to the ATP binding site.

It belongs to the ABC transporter superfamily.

It localises to the cell inner membrane. Functionally, probably part of an ABC transporter complex. Responsible for energy coupling to the transport system. This chain is Putative ABC transporter ATP-binding protein GSU3001, found in Geobacter sulfurreducens (strain ATCC 51573 / DSM 12127 / PCA).